We begin with the raw amino-acid sequence, 134 residues long: Large ribosomal subunit protein eL32 (134 aa).

This sequence belongs to the eukaryotic ribosomal protein eL32 family.

This chain is Large ribosomal subunit protein eL32 (RpL32), found in Drosophila affinis (Fruit fly).